The primary structure comprises 251 residues: Small ribosomal subunit protein uS2 (251 aa).

Belongs to the universal ribosomal protein uS2 family.

The sequence is that of Small ribosomal subunit protein uS2 from Novosphingobium aromaticivorans (strain ATCC 700278 / DSM 12444 / CCUG 56034 / CIP 105152 / NBRC 16084 / F199).